Consider the following 310-residue polypeptide: Zinc-finger homeodomain protein 3 (310 aa).

The interval 1 to 64 (MEIASQEDPI…GLGKNHDHSH (64 aa)) is disordered. Positions 39–56 (LNITTSNPLLVSSNSNGL) are enriched in polar residues. A ZF-HD dimerization-type; degenerate zinc finger spans residues 87–136 (YKECLKNHAATMGGNAIDGCGEFMPSGEEGSIEALTCSVCNCHRNFHRRE). 2 disordered regions span residues 184–220 (TAGSNSESEDLMEEEGGGSLTFRQPPPPPSPYSYGHN) and 281–310 (LSKKSNNVSNNVDLSAGNNDITENLASTNP). The span at 190-199 (ESEDLMEEEG) shows a compositional bias: acidic residues. A DNA-binding region (homeobox) is located at residues 222–285 (KKRFRTKFTQ…NNKQNLSKKS (64 aa)). Over residues 281–291 (LSKKSNNVSNN) the composition is skewed to low complexity. Residues 292-310 (VDLSAGNNDITENLASTNP) are compositionally biased toward polar residues.

Homo- and heterodimer with other ZFHD proteins. Interacts with MIF2 and MIF3; these interactions prevent nuclear localization and DNA-binding to inhibit transcription regulation activity. Binds to ZHD1, ZHD2 and ZHD11. Interacts with HIPP30. Interacts with KIN10, KIN11 and FLZ8. In terms of tissue distribution, mostly expressed in flowers and inflorescence.

It is found in the nucleus. Putative transcription factor. This Arabidopsis thaliana (Mouse-ear cress) protein is Zinc-finger homeodomain protein 3 (ZHD3).